The chain runs to 833 residues: Disintegrin and metalloproteinase domain-containing protein 17 (833 aa).

The signal sequence occupies residues 1 to 17 (MRQCALFLTSLVPIVLA). One can recognise a Peptidase M12B domain in the interval 223–474 (NTCKLLVVAD…KAQECFQERS (252 aa)). An interaction with classical swine fever virus envelope glycoprotein E2 region spans residues 301–345 (AKSYPNEEKDAWDVKMLLEQFSFDIAEEASKVCLAHLFTYQDFDM). Disulfide bonds link Cys365-Cys469, Cys423-Cys453, and Cys534-Cys555. Position 405 (His405) interacts with Zn(2+). Glu406 is a catalytic residue. Zn(2+) contacts are provided by His409 and His415. Residues 475–563 (NKVCGNSRVD…ECPPPGNAED (89 aa)) form the Disintegrin domain. Residues 672 to 692 (IVGSVLVFSLMLWIPVSILVH) traverse the membrane as a helical segment. Disordered stretches follow at residues 735–760 (TPGRLQPLQPLQPGPVLPSAPSVPVA) and 772–833 (QEDP…ETEC). 3 stretches are compositionally biased toward basic and acidic residues: residues 777–790 (TDSHVDEDGFEKDP), 800–816 (SFEDLTDHPVTRSEKAS), and 824–833 (SRVDSKETEC).

(Microbial infection) Interacts (via metalloproteinase domain) with classical swine fever virus envelope glycoprotein E2; this interaction allows binding and probably entry of the virus into the cell. As to quaternary structure, interacts with MAD2L1, MAPK14 and MUC1. Interacts with iRhom1/RHBDF1 and iRhom2/RHBDF2. Interacts with FRMD8 via its interaction with iRhom1/RHBDF1 and iRhom2/RHBDF2. Zn(2+) is required as a cofactor. The precursor is cleaved by a furin endopeptidase. In terms of processing, phosphorylated.

The protein resides in the membrane. The catalysed reaction is Narrow endopeptidase specificity. Cleaves Pro-Leu-Ala-Gln-Ala-|-Val-Arg-Ser-Ser-Ser in the membrane-bound, 26-kDa form of tumor necrosis factor alpha (TNFalpha). Similarly cleaves other membrane-anchored, cell-surface proteins to 'shed' the extracellular domains.. Transmembrane metalloprotease which mediates the ectodomain shedding of a myriad of transmembrane proteins including adhesion proteins, growth factor precursors and cytokines important for inflammation and immunity. Cleaves the membrane-bound precursor of TNF-alpha to its mature soluble form. Responsible for the proteolytical release of soluble JAM3 from endothelial cells surface. Responsible for the proteolytic release of several other cell-surface proteins, including p75 TNF-receptor, interleukin 1 receptor type II, p55 TNF-receptor, transforming growth factor-alpha, L-selectin, growth hormone receptor, MUC1 and the amyloid precursor protein. Acts as an activator of Notch pathway by mediating cleavage of Notch, generating the membrane-associated intermediate fragment called Notch extracellular truncation (NEXT). Plays a role in the proteolytic processing of ACE2. Plays a role in hemostasis through shedding of GP1BA, the platelet glycoprotein Ib alpha chain. Mediates the proteolytic cleavage of LAG3, leading to release the secreted form of LAG3. Mediates the proteolytic cleavage of IL6R, leading to the release of secreted form of IL6R. Mediates the proteolytic cleavage and shedding of FCGR3A upon NK cell stimulation, a mechanism that allows for increased NK cell motility and detachment from opsonized target cells. Cleaves TREM2, resulting in shedding of the TREM2 ectodomain. In terms of biological role, (Microbial infection) Acts as a receptor for classical swine fever virus. The sequence is that of Disintegrin and metalloproteinase domain-containing protein 17 (ADAM17) from Sus scrofa (Pig).